We begin with the raw amino-acid sequence, 154 residues long: Transcription antitermination protein NusB (154 aa).

This sequence belongs to the NusB family.

In terms of biological role, involved in transcription antitermination. Required for transcription of ribosomal RNA (rRNA) genes. Binds specifically to the boxA antiterminator sequence of the ribosomal RNA (rrn) operons. The sequence is that of Transcription antitermination protein NusB from Rickettsia typhi (strain ATCC VR-144 / Wilmington).